Here is a 100-residue protein sequence, read N- to C-terminus: Small ribosomal subunit protein uS14c (100 aa).

It belongs to the universal ribosomal protein uS14 family. In terms of assembly, part of the 30S ribosomal subunit.

It localises to the plastid. It is found in the chloroplast. Its function is as follows. Binds 16S rRNA, required for the assembly of 30S particles. The sequence is that of Small ribosomal subunit protein uS14c from Cucumis sativus (Cucumber).